Reading from the N-terminus, the 130-residue chain is Small ribosomal subunit protein uS11 (130 aa).

It belongs to the universal ribosomal protein uS11 family. In terms of assembly, part of the 30S ribosomal subunit. Interacts with proteins S7 and S18. Binds to IF-3.

Functionally, located on the platform of the 30S subunit, it bridges several disparate RNA helices of the 16S rRNA. Forms part of the Shine-Dalgarno cleft in the 70S ribosome. The polypeptide is Small ribosomal subunit protein uS11 (Moorella thermoacetica (strain ATCC 39073 / JCM 9320)).